The primary structure comprises 360 residues: Heme A synthase (360 aa).

9 helical membrane-spanning segments follow: residues 29–49, 111–131, 139–159, 175–195, 210–230, 242–262, 269–289, 309–329, and 330–350; these read WLFA…ATRL, FLGR…WWTG, LGLL…WIMV, LAAH…LAAG, LTAL…GLVA, PLMD…TPWI, VALV…VAAL, AILG…LLAV, and PLWA…MAAV. H276 is a heme binding site. Heme is bound at residue H337.

The protein belongs to the COX15/CtaA family. Type 2 subfamily. As to quaternary structure, interacts with CtaB. Heme b is required as a cofactor.

It is found in the cell membrane. It catalyses the reaction Fe(II)-heme o + 2 A + H2O = Fe(II)-heme a + 2 AH2. The protein operates within porphyrin-containing compound metabolism; heme A biosynthesis; heme A from heme O: step 1/1. Its function is as follows. Catalyzes the conversion of heme O to heme A by two successive hydroxylations of the methyl group at C8. The first hydroxylation forms heme I, the second hydroxylation results in an unstable dihydroxymethyl group, which spontaneously dehydrates, resulting in the formyl group of heme A. The protein is Heme A synthase of Methylobacterium nodulans (strain LMG 21967 / CNCM I-2342 / ORS 2060).